A 626-amino-acid chain; its full sequence is Phosphoenolpyruvate carboxykinase (ATP) 2 (626 aa).

Disordered stretches follow at residues 1–23 and 64–86; these read MASP…APVN and PNLV…KHQQ. 324–331 is a binding site for ATP; it reads GLSGTGKT.

This sequence belongs to the phosphoenolpyruvate carboxykinase (ATP) family. Homohexamer.

Its subcellular location is the cytoplasm. It carries out the reaction oxaloacetate + ATP = phosphoenolpyruvate + ADP + CO2. Its pathway is carbohydrate biosynthesis; gluconeogenesis. This Urochloa panicoides (Panic liverseed grass) protein is Phosphoenolpyruvate carboxykinase (ATP) 2 (PCK2).